Here is a 329-residue protein sequence, read N- to C-terminus: G-protein coupled bile acid receptor 1 (329 aa).

The Extracellular segment spans residues 1 to 18 (MMSHNTTELSAIPRGVQE). A glycan (N-linked (GlcNAc...) asparagine) is linked at N5. Residues 19 to 39 (LSLVLASLIVIANLLLALGIV) form a helical membrane-spanning segment. Topologically, residues 40 to 49 (LDRHLRSPPA) are cytoplasmic. Residues 50–70 (GCFFLSLLLAGLLTGLALPTL) form a helical membrane-spanning segment. The Extracellular segment spans residues 71 to 84 (PGLWNRSHQGYWSC). N75 carries N-linked (GlcNAc...) asparagine glycosylation. An intrachain disulfide couples C84 to C154. The helical transmembrane segment at 85–105 (LLLHLAPNFCFLSLLANLLLV) threads the bilayer. Over 106–124 (HGERYMAVLQPLRPHGSVR) the chain is Cytoplasmic. The helical transmembrane segment at 125–145 (LALFLTWISSLLFASLPALGW) threads the bilayer. Residues 146-157 (NHWSPGANCSSQ) are Extracellular-facing. N153 carries N-linked (GlcNAc...) asparagine glycosylation. A helical transmembrane segment spans residues 158-178 (AIFPAPYLYLEVYGLLLPAVG). The Cytoplasmic segment spans residues 179-229 (ATALLSVRVLATAHHQLREIRRLERAVCRDAPSTLARALTWRQARAQAGAT). A helical transmembrane segment spans residues 230–250 (LLFLLCWGPYVATLLLSVLAY). The Extracellular segment spans residues 251-260 (ERRPPLGPVT). A helical transmembrane segment spans residues 261–281 (LLSLISLGSASAAVVPVAMGL). Residues 282–329 (GDQRYTAPWRTAAQRWLQVLRGRPKRANPGPSTAYHSSSQCSTDLDLN) lie on the Cytoplasmic side of the membrane. The tract at residues 306–329 (KRANPGPSTAYHSSSQCSTDLDLN) is disordered. Residues 311-329 (GPSTAYHSSSQCSTDLDLN) are compositionally biased toward polar residues.

Belongs to the G-protein coupled receptor 1 family.

The protein localises to the cell membrane. Receptor for bile acid. Bile acid-binding induces its internalization, activation of extracellular signal-regulated kinase and intracellular cAMP production. May be involved in the suppression of macrophage functions by bile acids. Involved in bile acid promoted GLP1R secretion. The protein is G-protein coupled bile acid receptor 1 (Gpbar1) of Rattus norvegicus (Rat).